The primary structure comprises 212 residues: Uracil phosphoribosyltransferase (212 aa).

5-phospho-alpha-D-ribose 1-diphosphate-binding positions include Arg-78, Arg-103, and 130 to 138; that span reads DPMLATGGS. Residues Ile-193 and 198-200 contribute to the uracil site; that span reads GDA. Position 199 (Asp-199) interacts with 5-phospho-alpha-D-ribose 1-diphosphate.

Belongs to the UPRTase family. Requires Mg(2+) as cofactor.

It catalyses the reaction UMP + diphosphate = 5-phospho-alpha-D-ribose 1-diphosphate + uracil. Its pathway is pyrimidine metabolism; UMP biosynthesis via salvage pathway; UMP from uracil: step 1/1. Allosterically activated by GTP. Catalyzes the conversion of uracil and 5-phospho-alpha-D-ribose 1-diphosphate (PRPP) to UMP and diphosphate. The polypeptide is Uracil phosphoribosyltransferase (Ectopseudomonas mendocina (strain ymp) (Pseudomonas mendocina)).